A 324-amino-acid polypeptide reads, in one-letter code: CYFIP-related Rac1 interactor B (324 aa).

Residue Gly2 is the site of N-myristoyl glycine attachment. Residue Lys74 forms a Glycyl lysine isopeptide (Lys-Gly) (interchain with G-Cter in ubiquitin) linkage.

Belongs to the CYRI family. In terms of assembly, interacts with RAC1 (GTP-bound form preferentially). Post-translationally, ubiquitinated at Lys-74 upon Salmonella bacterial infection.

Its subcellular location is the membrane. The protein localises to the mitochondrion. Its function is as follows. Negatively regulates RAC1 signaling and RAC1-driven cytoskeletal remodeling. Regulates chemotaxis, cell migration and epithelial polarization by controlling the polarity, plasticity, duration and extent of protrusions. Limits Rac1 mediated activation of the Scar/WAVE complex, focuses protrusion signals and regulates pseudopod complexity by inhibiting Scar/WAVE-induced actin polymerization. Protects against Salmonella bacterial infection. Attenuates processes such as macropinocytosis, phagocytosis and cell migration and restrict sopE-mediated bacterial entry. Also restricts infection mediated by Mycobacterium tuberculosis and Listeria monocytogenes. Involved in the regulation of mitochondrial dynamics and oxidative stress. The protein is CYFIP-related Rac1 interactor B of Homo sapiens (Human).